A 113-amino-acid chain; its full sequence is Large ribosomal subunit protein uL24 (113 aa).

Belongs to the universal ribosomal protein uL24 family. Part of the 50S ribosomal subunit.

Its function is as follows. One of two assembly initiator proteins, it binds directly to the 5'-end of the 23S rRNA, where it nucleates assembly of the 50S subunit. Functionally, one of the proteins that surrounds the polypeptide exit tunnel on the outside of the subunit. The chain is Large ribosomal subunit protein uL24 from Chlamydia felis (strain Fe/C-56) (Chlamydophila felis).